We begin with the raw amino-acid sequence, 199 residues long: Thymidine kinase (199 aa).

Residues 15-22 (GSMFSGKS) and 88-91 (DEVQ) each bind ATP. The active-site Proton acceptor is the E89. Residues C145, C148, C183, and H186 each coordinate Zn(2+).

This sequence belongs to the thymidine kinase family. In terms of assembly, homotetramer.

Its subcellular location is the cytoplasm. It carries out the reaction thymidine + ATP = dTMP + ADP + H(+). This chain is Thymidine kinase, found in Staphylococcus aureus (strain USA300).